The chain runs to 1004 residues: UPF0182 protein Noca_1530 (1004 aa).

Residues 1-20 (MSELFDEAPRDPGPPARSGS) are disordered. 7 helical membrane-spanning segments follow: residues 26-46 (LIVT…FAGI), 71-91 (VLFF…IYLA), 120-140 (TWLL…SAIG), 183-203 (MAVL…YGGI), 212-232 (LSGA…LAKA), 261-281 (VLPA…LFFV), and 293-313 (VGLA…PGIV). Disordered regions lie at residues 899 to 924 (GVST…PPAT) and 974 to 1004 (LGQK…SPSS). Low complexity-rich tracts occupy residues 903-916 (GPGT…QPGD) and 979-1004 (GSAG…SPSS).

The protein belongs to the UPF0182 family.

It localises to the cell membrane. In Nocardioides sp. (strain ATCC BAA-499 / JS614), this protein is UPF0182 protein Noca_1530.